Reading from the N-terminus, the 145-residue chain is Small ribosomal subunit protein uS12 (145 aa).

The protein belongs to the universal ribosomal protein uS12 family. In terms of assembly, part of the 30S ribosomal subunit.

In terms of biological role, with S4 and S5 plays an important role in translational accuracy. Located at the interface of the 30S and 50S subunits. This is Small ribosomal subunit protein uS12 from Cenarchaeum symbiosum (strain A).